Consider the following 428-residue polypeptide: Probable anion transporter 6 (428 aa).

A signal peptide spans 1–22 (MKFPKRYAIVLLTFMCTNVCYI). The next 11 helical transmembrane spans lie at 47–67 (MILSMFYYGYVLSQIPGGWAA), 74–94 (LVLLLSFVLWSSICAVVPLDP), 98–118 (ILLVLSRLLVGVAQGLIFPSI), 137–157 (LTTSGMYLGAACGMLLLPSLV), 164–184 (SVFSVEAMLGVAWLLIWFKFA), 221–241 (ILFSLPIWAIVVNNFTFHYAL), 269–289 (LPYLNMFLFSNIGGVLADHLI), 301–321 (KLLNTVGFVVSAIALMALPLF), 327–347 (AIFCSSVSLGFLALGRAGFAV), 356–376 (FAGIVMGISNTAGTLAGIVGV), and 401–421 (TVFFVPGYLCIFSSFIFLIFS).

This sequence belongs to the major facilitator superfamily. Sodium/anion cotransporter (TC 2.A.1.14) family.

Its subcellular location is the cell membrane. In terms of biological role, probable anion transporter. The polypeptide is Probable anion transporter 6 (PHT4;6) (Oryza sativa subsp. japonica (Rice)).